Consider the following 107-residue polypeptide: Heme-degrading monooxygenase (107 aa).

An ABM domain is found at 2–94 (IIVTNTAKIT…YILDNKIAYY (93 aa)). Asn-6 contributes to the Fe cation binding site. Heme is bound at residue His-76.

The protein belongs to the antibiotic biosynthesis monooxygenase family. Heme-degrading monooxygenase IsdG subfamily. In terms of assembly, homodimer.

The protein resides in the cytoplasm. It carries out the reaction heme b + 3 reduced [NADPH--hemoprotein reductase] + 3 O2 = biliverdin IXalpha + CO + Fe(2+) + 3 oxidized [NADPH--hemoprotein reductase] + 3 H2O + H(+). Functionally, allows bacterial pathogens to use the host heme as an iron source. Catalyzes the oxidative degradation of the heme macrocyclic porphyrin ring to the biliverdin in the presence of a suitable electron donor such as ascorbate or NADPH--cytochrome P450 reductase, with subsequent release of free iron. The chain is Heme-degrading monooxygenase from Bacillus cereus (strain ATCC 14579 / DSM 31 / CCUG 7414 / JCM 2152 / NBRC 15305 / NCIMB 9373 / NCTC 2599 / NRRL B-3711).